The sequence spans 1007 residues: Exportin-7 (1007 aa).

This sequence belongs to the exportin family.

It localises to the nucleus. It is found in the cytoplasm. The protein resides in the nuclear pore complex. In terms of biological role, mediates the nuclear export of proteins (cargos) with broad substrate specificity. The protein is Exportin-7 (xpo7) of Dictyostelium discoideum (Social amoeba).